The chain runs to 227 residues: Orotate phosphoribosyltransferase (227 aa).

4 residues coordinate 5-phospho-alpha-D-ribose 1-diphosphate: Lys51, Arg119, Lys120, and Lys123. Residues Thr149 and Arg177 each contribute to the orotate site.

Belongs to the purine/pyrimidine phosphoribosyltransferase family. PyrE subfamily. In terms of assembly, homodimer. Expressed in body wall muscles, spermatheca and vulva muscles.

It carries out the reaction orotidine 5'-phosphate + diphosphate = orotate + 5-phospho-alpha-D-ribose 1-diphosphate. The catalysed reaction is UMP + diphosphate = 5-phospho-alpha-D-ribose 1-diphosphate + uracil. It functions in the pathway pyrimidine metabolism; UMP biosynthesis via de novo pathway; UMP from orotate: step 1/2. The protein operates within pyrimidine metabolism; UMP biosynthesis via salvage pathway; UMP from uracil: step 1/1. Phosphoribosyltransferase which catalyzes the formation of UMP from uracil in vitro and thus may be involved in UMP biosynthesis via the salvage pathway. May also participate in the first step of UMP synthesis by catalyzing the formation of orotidine 5'-phosphate, a UMP precursor, from orotate. This is Orotate phosphoribosyltransferase from Caenorhabditis elegans.